We begin with the raw amino-acid sequence, 177 residues long: ATP synthase subunit b (177 aa).

A helical membrane pass occupies residues 35-55 (FFVVLAIFLIVLAVIGTFVVP).

This sequence belongs to the ATPase B chain family. In terms of assembly, F-type ATPases have 2 components, F(1) - the catalytic core - and F(0) - the membrane proton channel. F(1) has five subunits: alpha(3), beta(3), gamma(1), delta(1), epsilon(1). F(0) has three main subunits: a(1), b(2) and c(10-14). The alpha and beta chains form an alternating ring which encloses part of the gamma chain. F(1) is attached to F(0) by a central stalk formed by the gamma and epsilon chains, while a peripheral stalk is formed by the delta and b chains.

It is found in the cell membrane. Its function is as follows. F(1)F(0) ATP synthase produces ATP from ADP in the presence of a proton or sodium gradient. F-type ATPases consist of two structural domains, F(1) containing the extramembraneous catalytic core and F(0) containing the membrane proton channel, linked together by a central stalk and a peripheral stalk. During catalysis, ATP synthesis in the catalytic domain of F(1) is coupled via a rotary mechanism of the central stalk subunits to proton translocation. Functionally, component of the F(0) channel, it forms part of the peripheral stalk, linking F(1) to F(0). This is ATP synthase subunit b from Mycobacteroides abscessus (strain ATCC 19977 / DSM 44196 / CCUG 20993 / CIP 104536 / JCM 13569 / NCTC 13031 / TMC 1543 / L948) (Mycobacterium abscessus).